Here is a 77-residue protein sequence, read N- to C-terminus: Acyl carrier protein (77 aa).

A Carrier domain is found at 2 to 77; it reads ADVLERVTKI…DAVNYIKSRL (76 aa). An O-(pantetheine 4'-phosphoryl)serine modification is found at Ser37.

Belongs to the acyl carrier protein (ACP) family. Post-translationally, 4'-phosphopantetheine is transferred from CoA to a specific serine of apo-ACP by AcpS. This modification is essential for activity because fatty acids are bound in thioester linkage to the sulfhydryl of the prosthetic group.

Its subcellular location is the cytoplasm. The protein operates within lipid metabolism; fatty acid biosynthesis. Its function is as follows. Carrier of the growing fatty acid chain in fatty acid biosynthesis. This is Acyl carrier protein from Geobacillus kaustophilus (strain HTA426).